Consider the following 407-residue polypeptide: Lysosome-associated membrane glycoprotein 1 (407 aa).

Residues M1 to G21 form the signal peptide. Residues A22–D189 are first lumenal domain. Topologically, residues A22–N371 are lumenal. 12 N-linked (GlcNAc...) asparagine glycosylation sites follow: N32, N40, N57, N72, N79, N98, N102, N116, N125, N145, N160, and N178. C36 and C75 form a disulfide bridge. A disulfide bridge connects residues C150 and C186. Residues E183–P206 form a disordered region. The segment at G190–E219 is hinge. Over residues T194–P206 the composition is skewed to pro residues. N-linked (GlcNAc...) asparagine glycans are attached at residues N215, N220, N233, N241, N253, N283, N297, N304, and N312. Residues N220–N371 are second lumenal domain. C223 and C260 are disulfide-bonded. Residues C328 and C365 are joined by a disulfide bond. Residues M372–I395 form a helical membrane-spanning segment. At G396 to I407 the chain is on the cytoplasmic side.

Belongs to the LAMP family. In terms of assembly, interacts with ABCB9; this interaction strongly stabilizes ABCB9 and protects ABCB9 against lysosomal degradation. Interacts with FURIN. Interacts with TMEM175; inhibiting the proton channel activity of TMEM175. In terms of processing, O- and N-glycosylated; some of the N-glycans attached to LAMP-1 are polylactosaminoglycans.

It localises to the lysosome membrane. Its subcellular location is the endosome membrane. The protein resides in the late endosome membrane. It is found in the cell membrane. The protein localises to the cytolytic granule membrane. Functionally, lysosomal membrane glycoprotein which plays an important role in lysosome biogenesis, lysosomal pH regulation, autophagy and cholesterol homeostasis. Acts as an important regulator of lysosomal lumen pH regulation by acting as a direct inhibitor of the proton channel TMEM175, facilitating lysosomal acidification for optimal hydrolase activity. Also plays an important role in NK-cells cytotoxicity. Mechanistically, participates in cytotoxic granule movement to the cell surface and perforin trafficking to the lytic granule. In addition, protects NK-cells from degranulation-associated damage induced by their own cytotoxic granule content. Presents carbohydrate ligands to selectins. The protein is Lysosome-associated membrane glycoprotein 1 (LAMP1) of Cricetulus griseus (Chinese hamster).